The chain runs to 264 residues: Electron transfer flavoprotein subunit beta (264 aa).

Residues alanine 6, 36 to 39 (NEWD), valine 64, 119 to 122 (GVQS), and 127 to 130 (YAST) each bind AMP.

As to quaternary structure, heterodimer of an alpha and a beta subunit. Forms a ternary complex with trimethylamine dehydrogenase.

Its function is as follows. Heterodimeric electron transfer flavoprotein that accepts electrons from trimethylamine dehydrogenase. It transfers the electrons to the main respiratory chain via ETF-ubiquinone oxidoreductase (ETF dehydrogenase). EtfB binds an AMP molecule that probably has a purely structural role. The sequence is that of Electron transfer flavoprotein subunit beta (etfB) from Methylophilus methylotrophus (Bacterium W3A1).